A 400-amino-acid chain; its full sequence is DNA primase small subunit PriS (400 aa).

Residues Asp98, Asp100, and Asp306 contribute to the active site.

This sequence belongs to the eukaryotic-type primase small subunit family. Heterodimer of a small subunit (PriS) and a large subunit (PriL). It depends on Mg(2+) as a cofactor. Mn(2+) is required as a cofactor.

Catalytic subunit of DNA primase, an RNA polymerase that catalyzes the synthesis of short RNA molecules used as primers for DNA polymerase during DNA replication. The small subunit contains the primase catalytic core and has DNA synthesis activity on its own. Binding to the large subunit stabilizes and modulates the activity, increasing the rate of DNA synthesis while decreasing the length of the DNA fragments, and conferring RNA synthesis capability. The DNA polymerase activity may enable DNA primase to also catalyze primer extension after primer synthesis. May also play a role in DNA repair. The polypeptide is DNA primase small subunit PriS (Methanocella arvoryzae (strain DSM 22066 / NBRC 105507 / MRE50)).